A 98-amino-acid polypeptide reads, in one-letter code: Co-chaperonin GroES (98 aa).

It belongs to the GroES chaperonin family. In terms of assembly, heptamer of 7 subunits arranged in a ring. Interacts with the chaperonin GroEL.

The protein localises to the cytoplasm. Functionally, together with the chaperonin GroEL, plays an essential role in assisting protein folding. The GroEL-GroES system forms a nano-cage that allows encapsulation of the non-native substrate proteins and provides a physical environment optimized to promote and accelerate protein folding. GroES binds to the apical surface of the GroEL ring, thereby capping the opening of the GroEL channel. This is Co-chaperonin GroES from Neorickettsia sennetsu (strain ATCC VR-367 / Miyayama) (Ehrlichia sennetsu).